A 349-amino-acid chain; its full sequence is MQHVYDVTIIGGGPAGLYSAFYSGLRGLKTKLIESQSQLGGKVLLYPEKLIWDIGGQPPILGEKFVKQLIQQAKTFDPTILTNTKVDFIERQEHLFIVHTATGERHYSKTVLLAVGGGIINPQKLTLEGAEKYEMSNLHYTVQSYKRFVNRDILISGGGNAAIDWAVELSPLAKSVTVVYRKDTLSAHEATVKEAIDAGVLIECNTTITKLLANDDKTAIQLVRCENSKTKESYTRQIDEVIISHGYNCEASLTFDEAISIPKKDDYYFEGKATGETAQPGIFAAGDILSFEGKINLLLGTFQDAANAVNSIKTYLEPTAYRHGMVSSHNELFKEKNRSIIEKELVPSH.

FAD is bound by residues Glu34, Lys42, Tyr46, Val86, Ile120, Asp287, and Ser328.

This sequence belongs to the ferredoxin--NADP reductase type 2 family. As to quaternary structure, homodimer. The cofactor is FAD.

The catalysed reaction is 2 reduced [2Fe-2S]-[ferredoxin] + NADP(+) + H(+) = 2 oxidized [2Fe-2S]-[ferredoxin] + NADPH. In Lysinibacillus sphaericus (strain C3-41), this protein is Ferredoxin--NADP reductase 3.